Consider the following 368-residue polypeptide: NAD(P)H-quinone oxidoreductase subunit 1, chloroplastic (368 aa).

9 consecutive transmembrane segments (helical) span residues 11–31 (RVIN…LIWI), 33–53 (IYIL…VWLE), 98–118 (WLFS…YLVI), 131–151 (IGVF…LMAG), 177–197 (LALC…VDIV), 205–225 (FWGW…ISSL), 255–275 (FGLF…FVTI), 305–325 (VLGI…FLFI), and 348–368 (FLLP…LLLL).

This sequence belongs to the complex I subunit 1 family. As to quaternary structure, NDH is composed of at least 16 different subunits, 5 of which are encoded in the nucleus.

The protein localises to the plastid. It is found in the chloroplast thylakoid membrane. It catalyses the reaction a plastoquinone + NADH + (n+1) H(+)(in) = a plastoquinol + NAD(+) + n H(+)(out). The enzyme catalyses a plastoquinone + NADPH + (n+1) H(+)(in) = a plastoquinol + NADP(+) + n H(+)(out). In terms of biological role, NDH shuttles electrons from NAD(P)H:plastoquinone, via FMN and iron-sulfur (Fe-S) centers, to quinones in the photosynthetic chain and possibly in a chloroplast respiratory chain. The immediate electron acceptor for the enzyme in this species is believed to be plastoquinone. Couples the redox reaction to proton translocation, and thus conserves the redox energy in a proton gradient. This chain is NAD(P)H-quinone oxidoreductase subunit 1, chloroplastic, found in Cycas taitungensis (Prince sago).